We begin with the raw amino-acid sequence, 272 residues long: Iodotyrosine deiodinase (272 aa).

Residues 5-25 (LSGVSYGLLAGILAMLIHLVY) traverse the membrane as a helical segment. FMN is bound by residues 82 to 86 (RRSVR), Ser-110, and 110 to 111 (SG). Residues Ala-112, Glu-139, Tyr-143, and Lys-164 each coordinate 3-iodo-L-tyrosine. Residues 219–221 (TST) and Arg-261 contribute to the FMN site.

This sequence belongs to the nitroreductase family. It depends on FMN as a cofactor.

The protein resides in the membrane. The enzyme catalyses 2 iodide + L-tyrosine + 2 NADP(+) = 3,5-diiodo-L-tyrosine + 2 NADPH + H(+). The catalysed reaction is iodide + L-tyrosine + NADP(+) = 3-iodo-L-tyrosine + NADPH. It carries out the reaction 3-iodo-L-tyrosine + iodide + NADP(+) = 3,5-diiodo-L-tyrosine + NADPH + H(+). It catalyses the reaction L-tyrosine + chloride + NADP(+) = 3-chloro-L-tyrosine + NADPH. The enzyme catalyses bromide + L-tyrosine + NADP(+) = 3-bromo-L-tyrosine + NADPH. In terms of biological role, catalyzes the dehalogenation of halotyrosines such as 3,5-diiodo-L-tyrosine. Likely to also catalyze the dehalogenation of other halotyrosines such as 3-bromo-L-tyrosine, 3-chloro-L-tyrosine and 3-iodo-L-tyrosine. The chain is Iodotyrosine deiodinase from Hydra vulgaris (Hydra).